The sequence spans 901 residues: HTH-type transcriptional regulator MalT (901 aa).

39 to 46 (SPAGYGKT) contributes to the ATP binding site. An HTH luxR-type domain is found at 829–894 (ELIRTSPLTQ…AAVQHAQKLL (66 aa)). The H-T-H motif DNA-binding region spans 853–872 (NEQIAGELEVAATTIKTHIR).

This sequence belongs to the MalT family. Monomer in solution. Oligomerizes to an active state in the presence of the positive effectors ATP and maltotriose.

Its activity is regulated as follows. Activated by ATP and maltotriose, which are both required for DNA binding. Its function is as follows. Positively regulates the transcription of the maltose regulon whose gene products are responsible for uptake and catabolism of malto-oligosaccharides. Specifically binds to the promoter region of its target genes, recognizing a short DNA motif called the MalT box. In Escherichia coli (strain 55989 / EAEC), this protein is HTH-type transcriptional regulator MalT.